We begin with the raw amino-acid sequence, 504 residues long: Maturase K (504 aa).

Belongs to the intron maturase 2 family. MatK subfamily.

Its subcellular location is the plastid. It localises to the chloroplast. In terms of biological role, usually encoded in the trnK tRNA gene intron. Probably assists in splicing its own and other chloroplast group II introns. The sequence is that of Maturase K from Alliaria petiolata (Garlic mustard).